Consider the following 81-residue polypeptide: Beta-defensin 34 (81 aa).

The first 20 residues, 1 to 20 (MKTFLFLFAVLFFWSQPRMH), serve as a signal peptide directing secretion. 3 disulfide bridges follow: Cys28/Cys55, Cys35/Cys49, and Cys39/Cys56. Over residues 62 to 72 (CGRSKGNQSDE) the composition is skewed to polar residues. Residues 62-81 (CGRSKGNQSDEGSGHMGTRG) are disordered.

The protein belongs to the beta-defensin family. In terms of tissue distribution, only expressed in epididymis (caput, corpus and cauda).

It localises to the secreted. In terms of biological role, has antibacterial activity. This chain is Beta-defensin 34 (Defb34), found in Mus musculus (Mouse).